The sequence spans 310 residues: GMP synthase [glutamine-hydrolyzing] subunit B (310 aa).

One can recognise a GMPS ATP-PPase domain in the interval 2–185 (FDPKKFIDEA…LGLPDSIVYR (184 aa)). 29 to 35 (SGGVDSS) provides a ligand contact to ATP.

In terms of assembly, heterodimer composed of a glutamine amidotransferase subunit (A) and a GMP-binding subunit (B).

The catalysed reaction is XMP + L-glutamine + ATP + H2O = GMP + L-glutamate + AMP + diphosphate + 2 H(+). The protein operates within purine metabolism; GMP biosynthesis; GMP from XMP (L-Gln route): step 1/1. Its function is as follows. Catalyzes the synthesis of GMP from XMP. This chain is GMP synthase [glutamine-hydrolyzing] subunit B (guaAB), found in Methanocaldococcus jannaschii (strain ATCC 43067 / DSM 2661 / JAL-1 / JCM 10045 / NBRC 100440) (Methanococcus jannaschii).